We begin with the raw amino-acid sequence, 165 residues long: 2-C-methyl-D-erythritol 2,4-cyclodiphosphate synthase (165 aa).

A divalent metal cation-binding residues include Asp-12 and His-14. Residues 12 to 14 and 38 to 39 each bind 4-CDP-2-C-methyl-D-erythritol 2-phosphate; these read DVH and HS. An a divalent metal cation-binding site is contributed by His-46. Residues 60 to 62, 65 to 69, Phe-143, and Arg-146 contribute to the 4-CDP-2-C-methyl-D-erythritol 2-phosphate site; these read DIG and FPDTD.

The protein belongs to the IspF family. As to quaternary structure, homotrimer. The cofactor is a divalent metal cation.

It carries out the reaction 4-CDP-2-C-methyl-D-erythritol 2-phosphate = 2-C-methyl-D-erythritol 2,4-cyclic diphosphate + CMP. It participates in isoprenoid biosynthesis; isopentenyl diphosphate biosynthesis via DXP pathway; isopentenyl diphosphate from 1-deoxy-D-xylulose 5-phosphate: step 4/6. Its function is as follows. Involved in the biosynthesis of isopentenyl diphosphate (IPP) and dimethylallyl diphosphate (DMAPP), two major building blocks of isoprenoid compounds. Catalyzes the conversion of 4-diphosphocytidyl-2-C-methyl-D-erythritol 2-phosphate (CDP-ME2P) to 2-C-methyl-D-erythritol 2,4-cyclodiphosphate (ME-CPP) with a corresponding release of cytidine 5-monophosphate (CMP). In Aromatoleum aromaticum (strain DSM 19018 / LMG 30748 / EbN1) (Azoarcus sp. (strain EbN1)), this protein is 2-C-methyl-D-erythritol 2,4-cyclodiphosphate synthase.